We begin with the raw amino-acid sequence, 394 residues long: Elongation factor Tu 2 (394 aa).

Residues 10-204 (KPHVNVGTIG…FLDSYIPEPE (195 aa)) enclose the tr-type G domain. The tract at residues 19–26 (GHVDHGKT) is G1. 19-26 (GHVDHGKT) is a GTP binding site. Thr-26 is a Mg(2+) binding site. Residues 60–64 (GITIN) are G2. The G3 stretch occupies residues 81-84 (DCPG). GTP-binding positions include 81 to 85 (DCPGH) and 136 to 139 (NKCD). Residues 136 to 139 (NKCD) form a G4 region. The segment at 174-176 (SAL) is G5.

Belongs to the TRAFAC class translation factor GTPase superfamily. Classic translation factor GTPase family. EF-Tu/EF-1A subfamily. As to quaternary structure, monomer.

The protein localises to the cytoplasm. It carries out the reaction GTP + H2O = GDP + phosphate + H(+). Its function is as follows. GTP hydrolase that promotes the GTP-dependent binding of aminoacyl-tRNA to the A-site of ribosomes during protein biosynthesis. This is Elongation factor Tu 2 from Shigella flexneri serotype 5b (strain 8401).